A 299-amino-acid polypeptide reads, in one-letter code: Taste receptor type 2 member 1 (299 aa).

Residues M1–Y9 are Extracellular-facing. Residues F10–V30 traverse the membrane as a helical segment. Residues N31–R55 are Cytoplasmic-facing. Residues I56–I76 form a helical membrane-spanning segment. Topologically, residues M77–N81 are extracellular. The helical transmembrane segment at C82–F102 threads the bilayer. The Cytoplasmic segment spans residues Y103–K124. The helical transmembrane segment at L125–S145 threads the bilayer. Residues K146–S178 lie on the Extracellular side of the membrane. The N-linked (GlcNAc...) asparagine glycan is linked to N163. The helical transmembrane segment at F179–F199 threads the bilayer. At S200 to A222 the chain is on the cytoplasmic side. A helical transmembrane segment spans residues P223–I243. Residues K244–F257 lie on the Extracellular side of the membrane. A helical transmembrane segment spans residues I258 to I278. The Cytoplasmic segment spans residues L279–Q299.

Belongs to the G-protein coupled receptor T2R family.

The protein resides in the membrane. Its function is as follows. Receptor that may play a role in the perception of bitterness and is gustducin-linked. May play a role in sensing the chemical composition of the gastrointestinal content. The activity of this receptor may stimulate alpha gustducin, mediate PLC-beta-2 activation and lead to the gating of TRPM5. The chain is Taste receptor type 2 member 1 (TAS2R1) from Pan paniscus (Pygmy chimpanzee).